Here is a 490-residue protein sequence, read N- to C-terminus: Thiamine biosynthesis bifunctional protein ThiED (490 aa).

Positions 1–213 (MASNGHTLRL…PDPALAATEI (213 aa)) are thiamine-phosphate synthase. 4-amino-2-methyl-5-(diphosphooxymethyl)pyrimidine-binding positions include 50–54 (QYRNK) and asparagine 82. Aspartate 83 and aspartate 102 together coordinate Mg(2+). Serine 121 is a 4-amino-2-methyl-5-(diphosphooxymethyl)pyrimidine binding site. Residue 147-149 (SRS) coordinates 2-[(2R,5Z)-2-carboxy-4-methylthiazol-5(2H)-ylidene]ethyl phosphate. Residue lysine 150 coordinates 4-amino-2-methyl-5-(diphosphooxymethyl)pyrimidine. 2-[(2R,5Z)-2-carboxy-4-methylthiazol-5(2H)-ylidene]ethyl phosphate-binding positions include glycine 177 and 197 to 198 (IS). The interval 229–490 (LTVAGSDSGG…ILAAEDVRDR (262 aa)) is hydroxymethylpyrimidine/phosphomethylpyrimidine kinase. Glutamine 266 is a 4-amino-5-hydroxymethyl-2-methylpyrimidine binding site.

It in the N-terminal section; belongs to the thiamine-phosphate synthase family. In the C-terminal section; belongs to the ThiD family. The cofactor is Mg(2+).

The enzyme catalyses 2-[(2R,5Z)-2-carboxy-4-methylthiazol-5(2H)-ylidene]ethyl phosphate + 4-amino-2-methyl-5-(diphosphooxymethyl)pyrimidine + 2 H(+) = thiamine phosphate + CO2 + diphosphate. It catalyses the reaction 2-(2-carboxy-4-methylthiazol-5-yl)ethyl phosphate + 4-amino-2-methyl-5-(diphosphooxymethyl)pyrimidine + 2 H(+) = thiamine phosphate + CO2 + diphosphate. The catalysed reaction is 4-methyl-5-(2-phosphooxyethyl)-thiazole + 4-amino-2-methyl-5-(diphosphooxymethyl)pyrimidine + H(+) = thiamine phosphate + diphosphate. It carries out the reaction 4-amino-5-hydroxymethyl-2-methylpyrimidine + ATP = 4-amino-2-methyl-5-(phosphooxymethyl)pyrimidine + ADP + H(+). The enzyme catalyses 4-amino-2-methyl-5-(phosphooxymethyl)pyrimidine + ATP = 4-amino-2-methyl-5-(diphosphooxymethyl)pyrimidine + ADP. It functions in the pathway cofactor biosynthesis; thiamine diphosphate biosynthesis; 4-amino-2-methyl-5-diphosphomethylpyrimidine from 5-amino-1-(5-phospho-D-ribosyl)imidazole: step 3/3. The protein operates within cofactor biosynthesis; thiamine diphosphate biosynthesis; thiamine phosphate from 4-amino-2-methyl-5-diphosphomethylpyrimidine and 4-methyl-5-(2-phosphoethyl)-thiazole: step 1/1. Functionally, condenses 4-methyl-5-(beta-hydroxyethyl)thiazole monophosphate (THZ-P) and 2-methyl-4-amino-5-hydroxymethyl pyrimidine pyrophosphate (HMP-PP) to form thiamine monophosphate (TMP). Catalyzes the phosphorylation of hydroxymethylpyrimidine phosphate (HMP-P) to HMP-PP, and of HMP to HMP-P. The sequence is that of Thiamine biosynthesis bifunctional protein ThiED (thiDE) from Geobacter sulfurreducens (strain ATCC 51573 / DSM 12127 / PCA).